We begin with the raw amino-acid sequence, 276 residues long: MTENINAGIPLGKQVGHSETYDPSHLFPVARREARKSLGLADDLPFSGPDIWNAYELSWLDSKGKPCVALGEITFPCTSENIIESKSLKLYLNSFNLTRFTSTARVKEIIREDLSRVAGAEVEVKILTPEEFTEVTISAPEGSCIDDLELEEEINAYRPTANYLSTGPEETEEELYTNLLRTNCPVTGQPDWATVIINYRGKAIDQRGLLRYIISFRQHEGFHENCVERIFMDILNRCAPARLTVYARFTRRGGLDINPYRTTHAEHFVNLRLARQ.

83–85 provides a ligand contact to substrate; the sequence is IES. 85-86 contributes to the NADPH binding site; the sequence is SK. C184 acts as the Thioimide intermediate in catalysis. Catalysis depends on D191, which acts as the Proton donor. 223 to 224 is a binding site for substrate; sequence HE. Position 252 to 253 (252 to 253) interacts with NADPH; sequence RG.

It belongs to the GTP cyclohydrolase I family. QueF type 2 subfamily. As to quaternary structure, homodimer.

The protein localises to the cytoplasm. It carries out the reaction 7-aminomethyl-7-carbaguanine + 2 NADP(+) = 7-cyano-7-deazaguanine + 2 NADPH + 3 H(+). The protein operates within tRNA modification; tRNA-queuosine biosynthesis. In terms of biological role, catalyzes the NADPH-dependent reduction of 7-cyano-7-deazaguanine (preQ0) to 7-aminomethyl-7-deazaguanine (preQ1). In Desulfotalea psychrophila (strain LSv54 / DSM 12343), this protein is NADPH-dependent 7-cyano-7-deazaguanine reductase.